Consider the following 502-residue polypeptide: Mannitol 2-dehydrogenase (502 aa).

Residue Ile-37–Ala-48 participates in NAD(+) binding.

This sequence belongs to the mannitol dehydrogenase family. Monomer.

It carries out the reaction D-mannitol + NAD(+) = D-fructose + NADH + H(+). In terms of biological role, catalyzes the NAD(H)-dependent interconversion of D-fructose and D-mannitol in the mannitol metabolic pathway. The polypeptide is Mannitol 2-dehydrogenase (Aspergillus terreus (strain NIH 2624 / FGSC A1156)).